A 437-amino-acid polypeptide reads, in one-letter code: Magnetosome protein MamN (437 aa).

11 consecutive transmembrane segments (helical) span residues 26-46 (LAVL…GTYT), 53-73 (SIYF…ALLA), 95-115 (WILV…NSLI), 136-156 (VPVI…TMIG), 174-194 (FIGG…LFFE), 229-249 (YGLI…PLKV), 252-268 (GWIA…LGRF), 281-301 (DILF…VGIL), 320-340 (AILL…GTSA), 358-378 (AAWW…LSGA), and 416-436 (WGLP…AVLA).

This sequence belongs to the arsenite-antimonite (ArsB) efflux (TC 2.A.45) family.

The protein resides in the magnetosome membrane. Its function is as follows. Plays a role in biomineralization; might regulate pH in the magnetosome. This Magnetospirillum gryphiswaldense (strain DSM 6361 / JCM 21280 / NBRC 15271 / MSR-1) protein is Magnetosome protein MamN.